The sequence spans 338 residues: Glyceraldehyde-3-phosphate dehydrogenase GAPC2, cytosolic (338 aa).

NAD(+) contacts are provided by residues 15–16 (RI), Asp-37, and Arg-84. 155-157 (SCT) is a binding site for D-glyceraldehyde 3-phosphate. Cys-156 (nucleophile) is an active-site residue. Position 156 is an S-glutathionyl cysteine; transient; alternate (Cys-156). Position 156 is an S-nitrosocysteine; transient; alternate (Cys-156). Cys-160 carries the post-translational modification S-nitrosocysteine; transient. D-glyceraldehyde 3-phosphate is bound by residues Thr-186, 215–216 (TG), and Arg-238. NAD(+) is bound at residue Asn-320.

The protein belongs to the glyceraldehyde-3-phosphate dehydrogenase family. Homotetramer. Interacts with PLDDELTA. Binds to DPB3-1/NF-YC10 in response to heat-stress; this interaction promotes DPB3-1/NF-YC10 DNA-binding ability to its target promoter. In terms of processing, S-glutathionylation at Cys-156 in the presence of oxidized glutathione (GSSG). S-nitrosylation at Cys-156 and Cys-160 in the presence of S-nitrosoglutathione (GSNO) or sodium nitroprusside (SNP). These reactions may be both a protective mechanism against irreversible oxidation and a mean to store inhibited enzyme in a recoverable form.

Its subcellular location is the cytoplasm. It is found in the nucleus. It catalyses the reaction D-glyceraldehyde 3-phosphate + phosphate + NAD(+) = (2R)-3-phospho-glyceroyl phosphate + NADH + H(+). It functions in the pathway carbohydrate degradation; glycolysis; pyruvate from D-glyceraldehyde 3-phosphate: step 1/5. Its activity is regulated as follows. Inhibition by oxidized glutathione (GSSG), S-nitrosoglutathione (GSNO) and hydrogen peroxide. Key enzyme in glycolysis that catalyzes the first step of the pathway by converting D-glyceraldehyde 3-phosphate (G3P) into 3-phospho-D-glyceroyl phosphate. Essential for the maintenance of cellular ATP levels and carbohydrate metabolism. Binds DNA in vitro. Together with DNA polymerase II subunit B3-1 (DPB3-1) and GAPC1, enhances heat tolerance and promotes the expression of heat-inducible genes. The protein is Glyceraldehyde-3-phosphate dehydrogenase GAPC2, cytosolic of Arabidopsis thaliana (Mouse-ear cress).